We begin with the raw amino-acid sequence, 300 residues long: GTPase Era (300 aa).

The Era-type G domain occupies 4–173 (KYGIVAIVGK…INTIKQYLHK (170 aa)). The interval 12-19 (GKPNVGKS) is G1. 12–19 (GKPNVGKS) contributes to the GTP binding site. Positions 38 to 42 (QTTRN) are G2. The G3 stretch occupies residues 59–62 (DTPG). GTP contacts are provided by residues 59 to 63 (DTPGF) and 122 to 125 (SKAE). The segment at 122-125 (SKAE) is G4. Residues 152-154 (ISA) are G5. A KH type-2 domain is found at 204–282 (LNHEVPHGVG…SLTIFVKVEN (79 aa)).

Belongs to the TRAFAC class TrmE-Era-EngA-EngB-Septin-like GTPase superfamily. Era GTPase family. As to quaternary structure, monomer.

The protein localises to the cytoplasm. It is found in the cell membrane. In terms of biological role, an essential GTPase that binds both GDP and GTP, with rapid nucleotide exchange. Plays a role in 16S rRNA processing and 30S ribosomal subunit biogenesis and possibly also in cell cycle regulation and energy metabolism. This is GTPase Era from Ureaplasma urealyticum serovar 10 (strain ATCC 33699 / Western).